Consider the following 506-residue polypeptide: 2-isopropylmalate synthase (506 aa).

In terms of domain architecture, Pyruvate carboxyltransferase spans 4–266; sequence ILFMDTTLRD…EPSMTLKEIK (263 aa). Mn(2+) is bound by residues Asp-13, His-201, His-203, and Asn-237. Positions 390 to 506 are regulatory domain; sequence NITQLQVHFV…KLKSFIQLVK (117 aa).

It belongs to the alpha-IPM synthase/homocitrate synthase family. LeuA type 1 subfamily. In terms of assembly, homodimer. Mn(2+) serves as cofactor.

It localises to the cytoplasm. It catalyses the reaction 3-methyl-2-oxobutanoate + acetyl-CoA + H2O = (2S)-2-isopropylmalate + CoA + H(+). It functions in the pathway amino-acid biosynthesis; L-leucine biosynthesis; L-leucine from 3-methyl-2-oxobutanoate: step 1/4. Functionally, catalyzes the condensation of the acetyl group of acetyl-CoA with 3-methyl-2-oxobutanoate (2-ketoisovalerate) to form 3-carboxy-3-hydroxy-4-methylpentanoate (2-isopropylmalate). The chain is 2-isopropylmalate synthase from Bacillus thuringiensis (strain Al Hakam).